The following is a 361-amino-acid chain: sn-glycerol-3-phosphate import ATP-binding protein UgpC (361 aa).

The region spanning Leu4–Ile235 is the ABC transporter domain. ATP is bound at residue Gly37–Ser44.

The protein belongs to the ABC transporter superfamily. sn-glycerol-3-phosphate importer (TC 3.A.1.1.3) family. In terms of assembly, the complex is composed of two ATP-binding proteins (UgpC), two transmembrane proteins (UgpA and UgpE) and a solute-binding protein (UgpB).

It is found in the cell inner membrane. It carries out the reaction sn-glycerol 3-phosphate(out) + ATP + H2O = sn-glycerol 3-phosphate(in) + ADP + phosphate + H(+). Its function is as follows. Part of the ABC transporter complex UgpBAEC involved in sn-glycerol-3-phosphate (G3P) import. Responsible for energy coupling to the transport system. In Bordetella avium (strain 197N), this protein is sn-glycerol-3-phosphate import ATP-binding protein UgpC.